We begin with the raw amino-acid sequence, 763 residues long: MAP7 domain-containing protein 2 (763 aa).

Residues 1–11 (MERSGGNGAGA) are compositionally biased toward gly residues. Disordered stretches follow at residues 1-72 (MERS…REKC), 102-127 (LEEQ…LREE), and 140-531 (ERTQ…KAMI). Low complexity predominate over residues 12–31 (RAGAPSEGAAKGSSLLSAKS). The span at 53 to 72 (LKSDERQRLAKERREEREKC) shows a compositional bias: basic and acidic residues. 2 stretches are compositionally biased toward polar residues: residues 184 to 212 (PSDT…NLPK) and 241 to 251 (LKSSYKSSPTR). The span at 312-321 (KRSSSPVKSK) shows a compositional bias: low complexity. Composition is skewed to basic and acidic residues over residues 354–372 (ETLK…KEGA), 381–420 (PREE…EHSA), and 437–531 (LAEK…KAMI). Residues 434–575 (AKILAEKRRQ…QERLERKKRI (142 aa)) are a coiled coil.

The protein belongs to the MAP7 family. Interacts (via N-terminus) with microtubules; facilitates microtubule stabilization. Interacts with kinesin-1 family members, KIF5A, KIF5B and KIF5C. Detected only in the brain and testis (at the protein level).

Its subcellular location is the cytoplasm. It is found in the cytoskeleton. The protein localises to the microtubule organizing center. It localises to the centrosome. The protein resides in the cell projection. Its subcellular location is the axon. In terms of biological role, microtubule-stabilizing protein involved in the control of cell motility and neurite outgrowth. Acts as a critical cofactor for kinesin transport; in the proximal axon regulates kinesin-1 family members, KIF5A, KIF5B and KIF5C recruitment to microtubules and contributes to kinesin-1-mediated transport in the axons. The chain is MAP7 domain-containing protein 2 (Map7d2) from Rattus norvegicus (Rat).